Consider the following 33-residue polypeptide: Photosystem II reaction center protein Psb30 (33 aa).

The helical transmembrane segment at 5–25 (VVAQLTVLALIVVSGPLVIGL) threads the bilayer.

The protein belongs to the Psb30/Ycf12 family. As to quaternary structure, PSII is composed of 1 copy each of membrane proteins PsbA, PsbB, PsbC, PsbD, PsbE, PsbF, PsbH, PsbI, PsbJ, PsbK, PsbL, PsbM, PsbT, PsbX, PsbY, PsbZ, Psb30/Ycf12, peripheral proteins of the oxygen-evolving complex and a large number of cofactors. It forms dimeric complexes.

Its subcellular location is the plastid. The protein localises to the chloroplast thylakoid membrane. Functionally, a core subunit of photosystem II (PSII), probably helps stabilize the reaction center. This Zygnema circumcarinatum (Green alga) protein is Photosystem II reaction center protein Psb30.